The sequence spans 108 residues: DNA-binding protein HBbu (108 aa).

Belongs to the bacterial histone-like protein family.

Its function is as follows. Histone-like DNA-binding protein which is capable of wrapping DNA to stabilize it, and thus to prevent its denaturation under extreme environmental conditions. The protein is DNA-binding protein HBbu (hbb) of Borreliella japonica (Borrelia japonica).